The sequence spans 319 residues: Aspartate carbamoyltransferase catalytic subunit (319 aa).

Carbamoyl phosphate-binding residues include arginine 65 and threonine 66. Lysine 93 is an L-aspartate binding site. Positions 115, 149, and 152 each coordinate carbamoyl phosphate. L-aspartate-binding residues include arginine 182 and arginine 237. Glycine 278 and proline 279 together coordinate carbamoyl phosphate.

It belongs to the aspartate/ornithine carbamoyltransferase superfamily. ATCase family. In terms of assembly, heterododecamer (2C3:3R2) of six catalytic PyrB chains organized as two trimers (C3), and six regulatory PyrI chains organized as three dimers (R2).

The catalysed reaction is carbamoyl phosphate + L-aspartate = N-carbamoyl-L-aspartate + phosphate + H(+). Its pathway is pyrimidine metabolism; UMP biosynthesis via de novo pathway; (S)-dihydroorotate from bicarbonate: step 2/3. Its function is as follows. Catalyzes the condensation of carbamoyl phosphate and aspartate to form carbamoyl aspartate and inorganic phosphate, the committed step in the de novo pyrimidine nucleotide biosynthesis pathway. The protein is Aspartate carbamoyltransferase catalytic subunit of Dechloromonas aromatica (strain RCB).